The primary structure comprises 160 residues: Protein-export protein SecB (160 aa).

The protein belongs to the SecB family. As to quaternary structure, homotetramer, a dimer of dimers. One homotetramer interacts with 1 SecA dimer.

It is found in the cytoplasm. In terms of biological role, one of the proteins required for the normal export of preproteins out of the cell cytoplasm. It is a molecular chaperone that binds to a subset of precursor proteins, maintaining them in a translocation-competent state. It also specifically binds to its receptor SecA. This Aliivibrio salmonicida (strain LFI1238) (Vibrio salmonicida (strain LFI1238)) protein is Protein-export protein SecB.